The sequence spans 396 residues: Flavohemoprotein (396 aa).

The Globin domain occupies 1 to 136 (MLDNHTIAIV…LANVFIQRED (136 aa)). A heme b-binding site is contributed by H85. Catalysis depends on charge relay system residues Y95 and E135. The interval 147–396 (GGWSGVRPFR…YECFGPHKVV (250 aa)) is reductase. One can recognise an FAD-binding FR-type domain in the interval 150-255 (SGVRPFRIVN…AAPHGDFFLD (106 aa)). Residues Y188 and 204–207 (RQYS) contribute to the FAD site. 268 to 273 (GVGQTP) is an NADP(+) binding site. FAD is bound at residue 389–392 (CFGP).

It belongs to the globin family. Two-domain flavohemoproteins subfamily. In the C-terminal section; belongs to the flavoprotein pyridine nucleotide cytochrome reductase family. Heme b is required as a cofactor. FAD serves as cofactor.

The catalysed reaction is 2 nitric oxide + NADPH + 2 O2 = 2 nitrate + NADP(+) + H(+). The enzyme catalyses 2 nitric oxide + NADH + 2 O2 = 2 nitrate + NAD(+) + H(+). Is involved in NO detoxification in an aerobic process, termed nitric oxide dioxygenase (NOD) reaction that utilizes O(2) and NAD(P)H to convert NO to nitrate, which protects the bacterium from various noxious nitrogen compounds. Therefore, plays a central role in the inducible response to nitrosative stress. The protein is Flavohemoprotein of Pectobacterium atrosepticum (strain SCRI 1043 / ATCC BAA-672) (Erwinia carotovora subsp. atroseptica).